The chain runs to 267 residues: 5'-nucleotidase SurE (267 aa).

A divalent metal cation-binding residues include Asp-9, Asp-10, Ser-40, and Asn-97.

Belongs to the SurE nucleotidase family. It depends on a divalent metal cation as a cofactor.

Its subcellular location is the cytoplasm. The catalysed reaction is a ribonucleoside 5'-phosphate + H2O = a ribonucleoside + phosphate. Its function is as follows. Nucleotidase that shows phosphatase activity on nucleoside 5'-monophosphates. The protein is 5'-nucleotidase SurE of Helicobacter pylori (strain G27).